The sequence spans 519 residues: 2-isopropylmalate synthase (519 aa).

Residues 12–274 enclose the Pyruvate carboxyltransferase domain; it reads IRIFDTTLRD…DTSIHTSRIV (263 aa). Mn(2+)-binding residues include Asp-21, His-209, His-211, and Asn-245. The regulatory domain stretch occupies residues 396–519; sequence RLASMTISDV…MQNKQNTALA (124 aa).

It belongs to the alpha-IPM synthase/homocitrate synthase family. LeuA type 1 subfamily. As to quaternary structure, homodimer. Mn(2+) serves as cofactor.

Its subcellular location is the cytoplasm. The enzyme catalyses 3-methyl-2-oxobutanoate + acetyl-CoA + H2O = (2S)-2-isopropylmalate + CoA + H(+). The protein operates within amino-acid biosynthesis; L-leucine biosynthesis; L-leucine from 3-methyl-2-oxobutanoate: step 1/4. Functionally, catalyzes the condensation of the acetyl group of acetyl-CoA with 3-methyl-2-oxobutanoate (2-ketoisovalerate) to form 3-carboxy-3-hydroxy-4-methylpentanoate (2-isopropylmalate). This is 2-isopropylmalate synthase from Xylella fastidiosa (strain M23).